A 945-amino-acid polypeptide reads, in one-letter code: Isoleucine--tRNA ligase (945 aa).

The 'HIGH' region motif lies at 66 to 76 (PYANGDIHLGH). Residue E581 participates in L-isoleucyl-5'-AMP binding. A 'KMSKS' region motif is present at residues 622–626 (KMSKS). K625 is an ATP binding site. Zn(2+)-binding residues include C908, C911, C928, and C931.

It belongs to the class-I aminoacyl-tRNA synthetase family. IleS type 1 subfamily. Monomer. Zn(2+) serves as cofactor.

It localises to the cytoplasm. It carries out the reaction tRNA(Ile) + L-isoleucine + ATP = L-isoleucyl-tRNA(Ile) + AMP + diphosphate. Its function is as follows. Catalyzes the attachment of isoleucine to tRNA(Ile). As IleRS can inadvertently accommodate and process structurally similar amino acids such as valine, to avoid such errors it has two additional distinct tRNA(Ile)-dependent editing activities. One activity is designated as 'pretransfer' editing and involves the hydrolysis of activated Val-AMP. The other activity is designated 'posttransfer' editing and involves deacylation of mischarged Val-tRNA(Ile). This chain is Isoleucine--tRNA ligase, found in Burkholderia ambifaria (strain ATCC BAA-244 / DSM 16087 / CCUG 44356 / LMG 19182 / AMMD) (Burkholderia cepacia (strain AMMD)).